We begin with the raw amino-acid sequence, 192 residues long: NF-kappa-B inhibitor-interacting Ras-like protein 1 (192 aa).

A small GTPase-like region spans residues 1 to 192 (MGKGCKVVVC…KSKGTPSNDI (192 aa)). 11-18 (GMASVGKT) is a GTP binding site. Residues 35–43 (TSDTQEDIY) carry the Effector region motif. GTP is bound by residues 61–65 (DTRGL) and 120–123 (NKCE). Residues 169-192 (TQPQSKSAFPLPGRKSKGTPSNDI) are disordered.

This sequence belongs to the small GTPase superfamily. Ras family. KappaB-Ras subfamily.

The protein resides in the cytoplasm. Atypical Ras-like protein that acts as a potent regulator of NF-kappa-B activity by preventing the degradation of NF-kappa-B inhibitor beta (NFKBIB) by most signals, explaining why NFKBIB is more resistant to degradation. This chain is NF-kappa-B inhibitor-interacting Ras-like protein 1 (nkiras1), found in Danio rerio (Zebrafish).